Reading from the N-terminus, the 158-residue chain is 6,7-dimethyl-8-ribityllumazine synthase (158 aa).

5-amino-6-(D-ribitylamino)uracil contacts are provided by residues Phe-24, Ala-58–Glu-60, and Ala-82–Ile-84. Residue Gly-87 to Thr-88 coordinates (2S)-2-hydroxy-3-oxobutyl phosphate. The active-site Proton donor is His-90. Phe-115 is a 5-amino-6-(D-ribitylamino)uracil binding site. Arg-129 contacts (2S)-2-hydroxy-3-oxobutyl phosphate.

It belongs to the DMRL synthase family. In terms of assembly, forms an icosahedral capsid composed of 60 subunits, arranged as a dodecamer of pentamers.

It carries out the reaction (2S)-2-hydroxy-3-oxobutyl phosphate + 5-amino-6-(D-ribitylamino)uracil = 6,7-dimethyl-8-(1-D-ribityl)lumazine + phosphate + 2 H2O + H(+). The protein operates within cofactor biosynthesis; riboflavin biosynthesis; riboflavin from 2-hydroxy-3-oxobutyl phosphate and 5-amino-6-(D-ribitylamino)uracil: step 1/2. In terms of biological role, catalyzes the formation of 6,7-dimethyl-8-ribityllumazine by condensation of 5-amino-6-(D-ribitylamino)uracil with 3,4-dihydroxy-2-butanone 4-phosphate. This is the penultimate step in the biosynthesis of riboflavin. The chain is 6,7-dimethyl-8-ribityllumazine synthase from Pseudomonas paraeruginosa (strain DSM 24068 / PA7) (Pseudomonas aeruginosa (strain PA7)).